Here is a 155-residue protein sequence, read N- to C-terminus: SsrA-binding protein (155 aa).

This sequence belongs to the SmpB family.

The protein resides in the cytoplasm. Functionally, required for rescue of stalled ribosomes mediated by trans-translation. Binds to transfer-messenger RNA (tmRNA), required for stable association of tmRNA with ribosomes. tmRNA and SmpB together mimic tRNA shape, replacing the anticodon stem-loop with SmpB. tmRNA is encoded by the ssrA gene; the 2 termini fold to resemble tRNA(Ala) and it encodes a 'tag peptide', a short internal open reading frame. During trans-translation Ala-aminoacylated tmRNA acts like a tRNA, entering the A-site of stalled ribosomes, displacing the stalled mRNA. The ribosome then switches to translate the ORF on the tmRNA; the nascent peptide is terminated with the 'tag peptide' encoded by the tmRNA and targeted for degradation. The ribosome is freed to recommence translation, which seems to be the essential function of trans-translation. In Alkaliphilus oremlandii (strain OhILAs) (Clostridium oremlandii (strain OhILAs)), this protein is SsrA-binding protein.